Reading from the N-terminus, the 145-residue chain is Large ribosomal subunit protein uL13 (145 aa).

It belongs to the universal ribosomal protein uL13 family. Part of the 50S ribosomal subunit.

This protein is one of the early assembly proteins of the 50S ribosomal subunit, although it is not seen to bind rRNA by itself. It is important during the early stages of 50S assembly. This chain is Large ribosomal subunit protein uL13, found in Haloquadratum walsbyi (strain DSM 16790 / HBSQ001).